A 290-amino-acid chain; its full sequence is MDKIIKSIAQSGAFRAYVLDSTETVALAQEKHNTLSSSTVALGRTLIANQILAANQKGDSKITVKVIGDSSFGHIISVADTKGHVKGYIQNTGVDIKKTATGEVLVGPFMGNGHFVTIIDYGTGNPYTSTTPLITGEIGEDFAYYLTESEQTPSAIGLNVLLDENDKVKVAGGFMVQVLPGASEEEIARYEKRLQEMPAISYLLASKNHVDALLEAIYGDEPYKRLSEEPLSFQCDCSRERFEAALMTLPKADLQAMIDEDKGAEIVCQFCGTKYQFNESDLEAIINDKA.

2 disulfide bridges follow: cysteine 235-cysteine 237 and cysteine 268-cysteine 271.

Belongs to the HSP33 family. In terms of processing, under oxidizing conditions two disulfide bonds are formed involving the reactive cysteines. Under reducing conditions zinc is bound to the reactive cysteines and the protein is inactive.

The protein resides in the cytoplasm. Its function is as follows. Redox regulated molecular chaperone. Protects both thermally unfolding and oxidatively damaged proteins from irreversible aggregation. Plays an important role in the bacterial defense system toward oxidative stress. The protein is 33 kDa chaperonin of Streptococcus pyogenes serotype M2 (strain MGAS10270).